The chain runs to 222 residues: Probable pyridoxal 5'-phosphate synthase subunit SNO2 (222 aa).

L-glutamine is bound at residue 58–60 (GES). Catalysis depends on C91, which acts as the Nucleophile. L-glutamine-binding positions include R120 and 151–152 (IR). Residues H197 and E199 each act as charge relay system in the active site.

Belongs to the glutaminase PdxT/SNO family.

The enzyme catalyses aldehydo-D-ribose 5-phosphate + D-glyceraldehyde 3-phosphate + L-glutamine = pyridoxal 5'-phosphate + L-glutamate + phosphate + 3 H2O + H(+). It carries out the reaction L-glutamine + H2O = L-glutamate + NH4(+). It participates in cofactor biosynthesis; pyridoxal 5'-phosphate biosynthesis. Functionally, catalyzes the hydrolysis of glutamine to glutamate and ammonia as part of the biosynthesis of pyridoxal 5'-phosphate. The resulting ammonia molecule is channeled to the active site of a SNZ isoform. The polypeptide is Probable pyridoxal 5'-phosphate synthase subunit SNO2 (SNO2) (Saccharomyces cerevisiae (strain ATCC 204508 / S288c) (Baker's yeast)).